The following is a 103-amino-acid chain: Small ribosomal subunit protein uS10 (103 aa).

Belongs to the universal ribosomal protein uS10 family. Part of the 30S ribosomal subunit.

Involved in the binding of tRNA to the ribosomes. The polypeptide is Small ribosomal subunit protein uS10 (Xanthomonas campestris pv. campestris (strain B100)).